The primary structure comprises 309 residues: Homoserine kinase (309 aa).

91-101 is an ATP binding site; the sequence is PIGSGLGSSAC.

Belongs to the GHMP kinase family. Homoserine kinase subfamily.

The protein localises to the cytoplasm. The enzyme catalyses L-homoserine + ATP = O-phospho-L-homoserine + ADP + H(+). The protein operates within amino-acid biosynthesis; L-threonine biosynthesis; L-threonine from L-aspartate: step 4/5. In terms of biological role, catalyzes the ATP-dependent phosphorylation of L-homoserine to L-homoserine phosphate. In Klebsiella pneumoniae subsp. pneumoniae (strain ATCC 700721 / MGH 78578), this protein is Homoserine kinase.